Reading from the N-terminus, the 383-residue chain is RNA-binding motif, single-stranded-interacting protein 2 (383 aa).

An N-acetylmethionine modification is found at Met1. The tract at residues 28–56 (QMAPPSPRNSTPNSSGGGGGGSGGNDQLS) is disordered. The segment covering 42–51 (SGGGGGGSGG) has biased composition (gly residues). RRM domains lie at 58 to 131 (TNLY…MAKQ) and 137 to 222 (TNLY…FADG). Residue Ser108 is modified to Phosphoserine. Residue Ser287 is modified to Phosphoserine. Positions 352–383 (SSVSAEESNGQQNQLAVEPPSDHGVYPFQFSK) are disordered.

It localises to the nucleus. This is RNA-binding motif, single-stranded-interacting protein 2 (Rbms2) from Mus musculus (Mouse).